Here is a 132-residue protein sequence, read N- to C-terminus: L-ectoine synthase (132 aa).

This sequence belongs to the ectoine synthase family.

It carries out the reaction (2S)-4-acetamido-2-aminobutanoate = L-ectoine + H2O. It participates in amine and polyamine biosynthesis; ectoine biosynthesis; L-ectoine from L-aspartate 4-semialdehyde: step 3/3. Functionally, catalyzes the circularization of gamma-N-acetyl-alpha,gamma-diaminobutyric acid (ADABA) to ectoine (1,4,5,6-tetrahydro-2-methyl-4-pyrimidine carboxylic acid), which is an excellent osmoprotectant. The protein is L-ectoine synthase of Rhodococcus erythropolis (strain PR4 / NBRC 100887).